Consider the following 259-residue polypeptide: 5'-nucleotidase SurE (259 aa).

Residues D8, D9, S41, and N99 each contribute to the a divalent metal cation site.

The protein belongs to the SurE nucleotidase family. A divalent metal cation is required as a cofactor.

It is found in the cytoplasm. It catalyses the reaction a ribonucleoside 5'-phosphate + H2O = a ribonucleoside + phosphate. Functionally, nucleotidase that shows phosphatase activity on nucleoside 5'-monophosphates. This is 5'-nucleotidase SurE from Synechococcus sp. (strain JA-3-3Ab) (Cyanobacteria bacterium Yellowstone A-Prime).